We begin with the raw amino-acid sequence, 349 residues long: Glycosyltransferase 8 domain-containing protein 2 (349 aa).

At 1-6 (MALLRK) the chain is on the cytoplasmic side. Residues 7 to 24 (INQVLLFLLIVTLCVILY) traverse the membrane as a helical; Signal-anchor for type II membrane protein segment. The Lumenal segment spans residues 25 to 349 (KKVHKGTVSK…AGIFKLNHHS (325 aa)). Residue Asn-234 is glycosylated (N-linked (GlcNAc...) asparagine).

The protein belongs to the glycosyltransferase 8 family.

The protein localises to the membrane. This chain is Glycosyltransferase 8 domain-containing protein 2 (GLT8D2), found in Macaca fascicularis (Crab-eating macaque).